The chain runs to 5084 residues: Apicidin F synthase (5084 aa).

The tract at residues 209-606 (ARILQRQPDK…VGRLDSQVKL (398 aa)) is adenylation 1. Residues 731–808 (HETDNCQRLL…EAASSMREVV (78 aa)) form the Carrier 1 domain. Ser768 carries the post-translational modification O-(pantetheine 4'-phosphoryl)serine. Condensation regions lie at residues 822 to 1124 (YPLS…FPIY) and 1309 to 1609 (EIYC…SILV). Residues 1788-2192 (EDPTREAVFS…IGRKDNQIKI (405 aa)) are adenylation 2. A Carrier 2 domain is found at 2341–2415 (VVKDDPVSEL…DMAKGMAPLS (75 aa)). Ser2376 is subject to O-(pantetheine 4'-phosphoryl)serine. The interval 2415-2441 (SLTAPESTSSSSPQSFSTSTSTTIIEN) is disordered. Low complexity predominate over residues 2421-2437 (STSSSSPQSFSTSTSTT). Residues 2478 to 2755 (EDIFPCTPMQ…IVTLPRQLNI (278 aa)) are condensation 3. An adenylation 3 region spans residues 2935-3328 (RNNPRARAVV…GRRDGQIKLR (394 aa)). Positions 3463-3539 (ETWSSSEAIV…DMASRLSRPE (77 aa)) constitute a Carrier 3 domain. The residue at position 3500 (Ser3500) is an O-(pantetheine 4'-phosphoryl)serine. The interval 3581–3866 (EDIYPCTPLQ…IATVPSRTTI (286 aa)) is condensation 4. The interval 4029–4426 (RKQVELSPSH…TVSWIGRKDH (398 aa)) is adenylation 4. A Carrier 4 domain is found at 4554 to 4631 (ALKTPKERLL…DMADLLGPLR (78 aa)). Residue Ser4592 is modified to O-(pantetheine 4'-phosphoryl)serine. Residues 4669-4948 (EQIYPCTAYQ…ISKLPLRIQL (280 aa)) are condensation 5.

This sequence belongs to the NRP synthetase family.

Its pathway is secondary metabolite biosynthesis. In terms of biological role, non-ribosomal peptide synthetase; part of the gene cluster that mediates the biosynthesis of the cyclic tetrapeptide apicidin F (APF). The non-ribosomal peptide synthetase apf1 incorporates four different amino acids to produce apicidin F: L-phenylalanine, D-pipecolic acid (D-pip), N-methoxy-L-tryptophan and L-2-aminooctanedioic acid. L-Phenylalanine is the only proteinogenic amino acid directly used by apf1. The 3 other apf1 substrates are non-proteinogenic and have to be modified by other enzymes of the cluster. Lysine is converted to delta-1-pyrroline-5-carboxylate (P5C) which is reduced to L-pipecolic acid (L-pip) by apf3. L-pip is epimerized to D-pip, probably by apf1 activity, prior to incorporation. L-Tryptophan is N-oxidyzed by one of the cytochrome P450 monooxygenases (apf7 or apf8), and further methylated at the hydroxy group by the O-methyltransferase apf6 to yield N-methoxy-L-tryptophan. The synthesis of the fourth apf1 substrate is more complex. The fatty acid synthase apf5 is involved in the synthesis of the octanoic acid backbone of L-2-aminooctanedioic acid by fixing one acetyl-CoA unit and three malonyl-CoA units. Then one of the cytochrome P450 monooxygenases (apf7 or apf8) may oxidize this backbone to 2-oxooctanoic acid. The aminotransferase apf4 is predicted to catalyze the exchange of the keto group with an amino group. The next step would be the oxidation of 2-aminooctanoic acid by one of the cytochrome P450 monooxygenases (apf7 or apf8). The last step is the oxidation of 2-amino-8-hydroxyoctanoic acid to 2-aminooctanedioic acid is catalyzed by the FAD-dependent monooxygenase apf9. The sequence is that of Apicidin F synthase from Gibberella fujikuroi (strain CBS 195.34 / IMI 58289 / NRRL A-6831) (Bakanae and foot rot disease fungus).